A 2220-amino-acid chain; its full sequence is Calcineurin-binding protein cabin-1 (2220 aa).

2 positions are modified to phosphoserine: Ser10 and Ser11. Thr12 carries the phosphothreonine modification. Residues Ser20 and Ser66 each carry the phosphoserine modification. 3 TPR repeats span residues 36-69, 90-123, and 125-157; these read AFAL…SLLR, YSTY…DSTD, and NLWY…NPDH. The tract at residues 361 to 400 is disordered; the sequence is GAPVGDISGGDKSKKGVKRKKISEESGETAKRRSARVRNT. Residues 382-391 are compositionally biased toward basic and acidic residues; the sequence is ISEESGETAK. Residues Ser433 and Ser450 each carry the phosphoserine modification. The TPR 4 repeat unit spans residues 615 to 648; sequence VRVYWLKARFLALQGDMEQALENYDICTEMLQSS. Ser673 carries the post-translational modification Phosphoserine. TPR repeat units lie at residues 1055-1088 and 1106-1139; these read NELY…CPNR and KLNS…DSSN. Disordered stretches follow at residues 1299 to 1476, 1668 to 1845, 1916 to 2165, and 2197 to 2220; these read FARG…STPT, AEGS…RLSR, AQRQ…GSIS, and VLET…YMDI. Residues 1301 to 1324 show a composition bias toward basic and acidic residues; sequence RGEEKNTPKASEKEKACLVDEDSH. The segment covering 1327–1349 has biased composition (low complexity); the sequence is AGTLPGPGASLPSSSGPGLTSPP. Residues 1377–1397 are compositionally biased toward polar residues; the sequence is DSTAVALSDSSSTQDFFNEPT. Basic and acidic residues predominate over residues 1402–1412; the sequence is GSRKSYTEKRL. Position 1439 is a phosphoserine (Ser1439). Residues 1715–1725 show a composition bias toward gly residues; it reads SGPGPEPGGKV. Composition is skewed to basic and acidic residues over residues 1744–1753 and 1784–1794; these read SGERKDKESP and PARDRGPESRP. A compositionally biased stretch (pro residues) spans 1812-1823; the sequence is PLTPAQPAPAPA. 2 stretches are compositionally biased toward polar residues: residues 1918–1927 and 1975–1989; these read RQASGDTPTT and TIIT…STLD. Thr1924 carries the post-translational modification Phosphothreonine. Positions 2070–2081 are enriched in basic and acidic residues; sequence GKLRPEPRRDGE. A compositionally biased stretch (low complexity) spans 2091 to 2112; that stretch reads PLSSPPTAASSKAPSSGSAQPP. Residue Ser2094 is modified to Phosphoserine. The tract at residues 2116 to 2153 is required for interaction with calcineurin; sequence PGKPEPSRAKSRPLPNMPKLVIPSAATKFPPEITVTPP. Thr2151 and Thr2154 each carry phosphothreonine. Acidic residues predominate over residues 2207-2220; it reads LESETDEDDDYMDI.

Component of a complex that includes at least ASF1A, CABIN1, HIRA, histone H3.3 and UBN1. Interacts with calcineurin. Interacts with MEF2B. Activated through PKC-mediated hyperphosphorylation. Phosphorylation by the DNA damage kinases ATM and CHK2 enhances ubiquitination. Post-translationally, upon genotoxic stress, ubiquitination by the DCX(DDB2) E3 ubiquitin-protein ligase complex targets CABIN1 for proteasomal degradation, leading to the release of p53/TP53. Widely expressed in different tissues.

Its subcellular location is the nucleus. Functionally, may be required for replication-independent chromatin assembly. May serve as a negative regulator of T-cell receptor (TCR) signaling via inhibition of calcineurin. Inhibition of activated calcineurin is dependent on both PKC and calcium signals. Acts as a negative regulator of p53/TP53 by keeping p53 in an inactive state on chromatin at promoters of a subset of it's target genes. This Homo sapiens (Human) protein is Calcineurin-binding protein cabin-1 (CABIN1).